Consider the following 146-residue polypeptide: MGSKRTYVAKKTVTHVLYCVPTRWISLDRPATSALPIFDLSRLERKYSIPIRGIKYISILRKTRFSIGWEGEGMPSSSVVVAIISRSVASSDFLSWLRLCKLASWPSSSWNVTSVGFSSDPSLVGDMKSTSSTKCLGDSIVNLLLI.

This is an uncharacterized protein from Saccharomyces cerevisiae (strain ATCC 204508 / S288c) (Baker's yeast).